We begin with the raw amino-acid sequence, 719 residues long: Protein psiJ (719 aa).

Residues 1–21 form the signal peptide; that stretch reads MVSNLLKGLILFSLFISFLNG. Residues 22 to 653 lie on the Extracellular side of the membrane; sequence DDKIFPVTIR…RCQSVAVKAG (632 aa). N-linked (GlcNAc...) asparagine glycans are attached at residues Asn-46, Asn-59, Asn-86, Asn-113, Asn-301, Asn-372, Asn-435, Asn-457, Asn-562, and Asn-628. The PA14 domain maps to 112–260; sequence QNQTDPRVFY…KDYCGVCEGT (149 aa). A helical transmembrane segment spans residues 654 to 674; that stretch reads VIGGAAIAGVVVGGAVALGLA. The Cytoplasmic portion of the chain corresponds to 675 to 719; it reads LFGAKAGYNHWMSLKNNQMATSSVNPLYEPSPHQGTNPLWEAPPT.

It belongs to the prespore-cell-inducing factor family.

It localises to the membrane. The sequence is that of Protein psiJ (psiJ) from Dictyostelium discoideum (Social amoeba).